Consider the following 296-residue polypeptide: Fructose-bisphosphate aldolase class 1 (296 aa).

The active-site Proton acceptor is Glu-175. Residue Lys-212 is the Schiff-base intermediate with dihydroxyacetone-P of the active site.

It belongs to the class I fructose-bisphosphate aldolase family.

It catalyses the reaction beta-D-fructose 1,6-bisphosphate = D-glyceraldehyde 3-phosphate + dihydroxyacetone phosphate. It functions in the pathway carbohydrate degradation; glycolysis; D-glyceraldehyde 3-phosphate and glycerone phosphate from D-glucose: step 4/4. This chain is Fructose-bisphosphate aldolase class 1, found in Staphylococcus aureus (strain Mu3 / ATCC 700698).